Reading from the N-terminus, the 224-residue chain is Iron-sulfur cluster repair protein ScdA (224 aa).

Belongs to the RIC family. ScdA subfamily. Homodimer.

It is found in the cytoplasm. Functionally, di-iron-containing protein involved in the repair of iron-sulfur clusters damaged by oxidative and nitrosative stress conditions. This is Iron-sulfur cluster repair protein ScdA from Staphylococcus epidermidis (strain ATCC 35984 / DSM 28319 / BCRC 17069 / CCUG 31568 / BM 3577 / RP62A).